A 96-amino-acid chain; its full sequence is uncharacterized protein (96 aa).

It localises to the mitochondrion. This is an uncharacterized protein from Schizosaccharomyces pombe (strain 972 / ATCC 24843) (Fission yeast).